Reading from the N-terminus, the 176-residue chain is Glutamyl-tRNA(Gln) amidotransferase subunit F, mitochondrial (176 aa).

This sequence belongs to the GatF family. Subunit of the heterotrimeric GatFAB amidotransferase (AdT) complex, composed of A, B and F subunits.

Its subcellular location is the mitochondrion inner membrane. The catalysed reaction is L-glutamyl-tRNA(Gln) + L-glutamine + ATP + H2O = L-glutaminyl-tRNA(Gln) + L-glutamate + ADP + phosphate + H(+). Allows the formation of correctly charged Gln-tRNA(Gln) through the transamidation of misacylated Glu-tRNA(Gln) in the mitochondria. The reaction takes place in the presence of glutamine and ATP through an activated gamma-phospho-Glu-tRNA(Gln). Required for proper protein synthesis within the mitochondrion. This is Glutamyl-tRNA(Gln) amidotransferase subunit F, mitochondrial from Yarrowia lipolytica (strain CLIB 122 / E 150) (Yeast).